Here is a 545-residue protein sequence, read N- to C-terminus: High-affinity glucose transporter 1 (545 aa).

Transmembrane regions (helical) follow at residues 29–49 (VFFI…DISS), 72–92 (GFIT…SSFV), 100–120 (LSLL…SSVQ), 125–145 (LIIG…VAPV), 157–177 (GLIG…MFYL), 192–212 (IAWG…FFIP), 291–311 (LTGM…AGYS), 317–337 (VASS…LYFI), and 345–365 (LLIG…GILG). N376 and N387 each carry an N-linked (GlcNAc...) asparagine glycan. The next 2 membrane-spanning stretches (helical) occupy residues 395-415 (IACC…GIWV) and 433-453 (ISTS…PTGF). N-linked (GlcNAc...) asparagine glycosylation is present at N455. A helical membrane pass occupies residues 460 to 480 (TYIIYGVFCFAMATHVYFGFP). The segment at 524-545 (VEHEEDKLMNEDSNSESRENQA) is disordered.

Belongs to the major facilitator superfamily. Sugar transporter (TC 2.A.1.1) family. In terms of assembly, interacts with the human complement factors FH and C4BP. Also binds human immunodeficiency virus (HIV) protein gp160.

The protein localises to the cell membrane. Its function is as follows. High-affinity glucose transporter. Acts as a multifunctional complement-evasion molecule that causes down-regulation of complement activation by acquisition of human complement factors FH and C4BP. Also functions as a human immunodeficiency virus (HIV) receptor via binding the viral gp160 protein. Modulates hyphae formation. The sequence is that of High-affinity glucose transporter 1 from Candida albicans (strain SC5314 / ATCC MYA-2876) (Yeast).